The sequence spans 189 residues: Large ribosomal subunit protein bL25 (189 aa).

Belongs to the bacterial ribosomal protein bL25 family. CTC subfamily. Part of the 50S ribosomal subunit; part of the 5S rRNA/L5/L18/L25 subcomplex. Contacts the 5S rRNA. Binds to the 5S rRNA independently of L5 and L18.

This is one of the proteins that binds to the 5S RNA in the ribosome where it forms part of the central protuberance. In Azobacteroides pseudotrichonymphae genomovar. CFP2, this protein is Large ribosomal subunit protein bL25.